The chain runs to 557 residues: Glucose-6-phosphate isomerase (557 aa).

The active-site Proton donor is Glu361. Active-site residues include His392 and Lys520.

It belongs to the GPI family.

The protein resides in the cytoplasm. The catalysed reaction is alpha-D-glucose 6-phosphate = beta-D-fructose 6-phosphate. It participates in carbohydrate biosynthesis; gluconeogenesis. It functions in the pathway carbohydrate degradation; glycolysis; D-glyceraldehyde 3-phosphate and glycerone phosphate from D-glucose: step 2/4. Functionally, catalyzes the reversible isomerization of glucose-6-phosphate to fructose-6-phosphate. The chain is Glucose-6-phosphate isomerase from Acinetobacter venetianus (strain ATCC 31012 / DSM 23050 / BCRC 14357 / CCUG 45561 / CIP 110063 / KCTC 2702 / LMG 19082 / RAG-1).